A 457-amino-acid chain; its full sequence is MADS-box transcription factor 1 (457 aa).

An MADS-box domain is found at 11–71 (PSSPRRSIQR…NACHVYSSEE (61 aa)). 2 disordered regions span residues 195–278 (SGDY…SRLH) and 295–328 (SSGY…LGQE). Residues 199 to 216 (SDSPLEPSSSSSFSVPPE) are compositionally biased toward low complexity. The span at 218 to 234 (LNPTLSFQHNDVPQTDN) shows a compositional bias: polar residues. The span at 265 to 278 (KNRRNGKPRISRLH) shows a compositional bias: basic residues. A compositionally biased stretch (polar residues) spans 295–317 (SSGYLDPSSTPITPLDSAINQIT). Phosphoserine is present on Ser372.

Post-translationally, phosphorylated. Occurs periodically during mitosis.

Its subcellular location is the nucleus. Functionally, acts as a transcriptional activator with a role in the regulation of mitosis. Regulates septation and the periodic transcription of cdc15. In Schizosaccharomyces pombe (strain 972 / ATCC 24843) (Fission yeast), this protein is MADS-box transcription factor 1 (mbx1).